The sequence spans 202 residues: LexA repressor (202 aa).

Positions 28–48 (RAEIAQRLGFRSPNAAEEHLK) form a DNA-binding region, H-T-H motif. Residues S119 and K156 each act as for autocatalytic cleavage activity in the active site.

This sequence belongs to the peptidase S24 family. In terms of assembly, homodimer.

The catalysed reaction is Hydrolysis of Ala-|-Gly bond in repressor LexA.. In terms of biological role, represses a number of genes involved in the response to DNA damage (SOS response), including recA and lexA. Binds to the 16 bp palindromic sequence 5'-CTGTATATATATACAG-3'. In the presence of single-stranded DNA, RecA interacts with LexA causing an autocatalytic cleavage which disrupts the DNA-binding part of LexA, leading to derepression of the SOS regulon and eventually DNA repair. This is LexA repressor from Escherichia fergusonii (strain ATCC 35469 / DSM 13698 / CCUG 18766 / IAM 14443 / JCM 21226 / LMG 7866 / NBRC 102419 / NCTC 12128 / CDC 0568-73).